The sequence spans 396 residues: Phosphoglycerate kinase (396 aa).

Substrate-binding positions include 21-23 (DFN), Arg36, 59-62 (HLGR), Arg118, and Arg151. ATP is bound by residues Lys201, Gly292, Glu323, and 349–352 (GGDS).

This sequence belongs to the phosphoglycerate kinase family. In terms of assembly, monomer.

The protein resides in the cytoplasm. It carries out the reaction (2R)-3-phosphoglycerate + ATP = (2R)-3-phospho-glyceroyl phosphate + ADP. It functions in the pathway carbohydrate degradation; glycolysis; pyruvate from D-glyceraldehyde 3-phosphate: step 2/5. The polypeptide is Phosphoglycerate kinase (Leptospira interrogans serogroup Icterohaemorrhagiae serovar copenhageni (strain Fiocruz L1-130)).